Consider the following 546-residue polypeptide: Membrane protein insertase YidC (546 aa).

A helical membrane pass occupies residues 8-28 (ILLATVLSVGILILWQVIFPT). A disordered region spans residues 31–70 (VPPKPAPPPAAEVAKPAAPASPAPGAAAPAVPAPPPDAPE). Over residues 41-60 (AEVAKPAAPASPAPGAAAPA) the composition is skewed to low complexity. The next 5 membrane-spanning stretches (helical) occupy residues 326-346 (IDYG…LYVM), 356-376 (WGVA…PLTY), 422-442 (LGGC…YAAL), 459-479 (LTAH…SFVM), and 498-518 (FFPG…TLYI).

The protein belongs to the OXA1/ALB3/YidC family. Type 1 subfamily. In terms of assembly, interacts with the Sec translocase complex via SecD. Specifically interacts with transmembrane segments of nascent integral membrane proteins during membrane integration.

The protein resides in the cell inner membrane. In terms of biological role, required for the insertion and/or proper folding and/or complex formation of integral membrane proteins into the membrane. Involved in integration of membrane proteins that insert both dependently and independently of the Sec translocase complex, as well as at least some lipoproteins. Aids folding of multispanning membrane proteins. The sequence is that of Membrane protein insertase YidC from Anaeromyxobacter sp. (strain K).